A 199-amino-acid chain; its full sequence is Nucleoside triphosphate pyrophosphatase (199 aa).

Aspartate 76 functions as the Proton acceptor in the catalytic mechanism.

Belongs to the Maf family. The cofactor is a divalent metal cation.

It is found in the cytoplasm. The enzyme catalyses a ribonucleoside 5'-triphosphate + H2O = a ribonucleoside 5'-phosphate + diphosphate + H(+). The catalysed reaction is a 2'-deoxyribonucleoside 5'-triphosphate + H2O = a 2'-deoxyribonucleoside 5'-phosphate + diphosphate + H(+). Nucleoside triphosphate pyrophosphatase. May have a dual role in cell division arrest and in preventing the incorporation of modified nucleotides into cellular nucleic acids. This chain is Nucleoside triphosphate pyrophosphatase, found in Roseobacter denitrificans (strain ATCC 33942 / OCh 114) (Erythrobacter sp. (strain OCh 114)).